The following is a 256-amino-acid chain: 5'-nucleotidase SurE (256 aa).

Residues aspartate 9, aspartate 10, serine 42, and asparagine 95 each contribute to the a divalent metal cation site.

The protein belongs to the SurE nucleotidase family. A divalent metal cation is required as a cofactor.

The protein resides in the cytoplasm. The catalysed reaction is a ribonucleoside 5'-phosphate + H2O = a ribonucleoside + phosphate. Nucleotidase that shows phosphatase activity on nucleoside 5'-monophosphates. This Campylobacter curvus (strain 525.92) protein is 5'-nucleotidase SurE.